The sequence spans 255 residues: Pimeloyl-[acyl-carrier protein] methyl ester esterase (255 aa).

The 227-residue stretch at 16–242 (LVLLHGWGMN…SSHAPFITEP (227 aa)) folds into the AB hydrolase-1 domain. Residues Trp-22, 82–83 (SL), and 143–147 (FMALQ) contribute to the substrate site. The active-site Nucleophile is the Ser-82. Catalysis depends on residues Asp-207 and His-235. Residue His-235 participates in substrate binding.

Belongs to the AB hydrolase superfamily. Carboxylesterase BioH family. As to quaternary structure, monomer.

It localises to the cytoplasm. The enzyme catalyses 6-carboxyhexanoyl-[ACP] methyl ester + H2O = 6-carboxyhexanoyl-[ACP] + methanol + H(+). It functions in the pathway cofactor biosynthesis; biotin biosynthesis. In terms of biological role, the physiological role of BioH is to remove the methyl group introduced by BioC when the pimeloyl moiety is complete. It allows to synthesize pimeloyl-ACP via the fatty acid synthetic pathway through the hydrolysis of the ester bonds of pimeloyl-ACP esters. The sequence is that of Pimeloyl-[acyl-carrier protein] methyl ester esterase from Vibrio vulnificus (strain YJ016).